The primary structure comprises 74 residues: MEIKYLLTVFLVLLIVSDHCQAFPFSLIPHAIGGLISAIKGRRKRDLDGQIDRSRNFRKRDAELEELLSKLPIY.

An N-terminal signal peptide occupies residues 1-22 (MEIKYLLTVFLVLLIVSDHCQA). Lysine amide is present on Lys40. Positions 46-74 (DLDGQIDRSRNFRKRDAELEELLSKLPIY) are excised as a propeptide.

As to expression, expressed by the venom gland.

The protein localises to the secreted. It localises to the target cell membrane. Its function is as follows. Has antibacterial activity against the Gram-positive bacteria S.aureus (MIC=48 uM), the Gram-negative bacteria E.coli (MIC=120 uM), and the yeast C.albicans (MIC=64 uM). Causes hemolysis on horse erythrocytes. In Androctonus amoreuxi (African fattail scorpion), this protein is Antimicrobial peptide 2.